Reading from the N-terminus, the 218-residue chain is Ropporin-1-like protein (218 aa).

Residues 17–46 (PELTDILKQFTKAAIRTQPADVLQWSAGYF) enclose the RIIa domain.

The protein belongs to the ropporin family. In terms of assembly, component of the axonemal radial spoke complex 1 (RS1), at least composed of spoke head proteins RSPH1, RSPH3, RSPH9 and the cilia-specific component RSPH4A or sperm-specific component RSPH6A, spoke stalk proteins RSPH14, DNAJB13, DYDC1, ROPN1L and NME5, and the anchor protein IQUB. May interact with AKAP3. Interacts with FSCB; the interaction increases upon spermatozoa capacitation conditions. Interacts with CFAP61. Sumoylated, sumoylation decreases upon spermatozoa capacitation conditions.

The protein resides in the cell projection. Its subcellular location is the cilium. It localises to the flagellum. Functionally, functions as part of axonemal radial spoke complexes that play an important part in the motility of sperm and cilia. Important for male fertility. With ROPN1, involved in fibrous sheath integrity and sperm motility, plays a role in PKA-dependent signaling processes required for spermatozoa capacitation. The sequence is that of Ropporin-1-like protein (ROPN1L) from Bos taurus (Bovine).